The sequence spans 466 residues: Asparagine--tRNA ligase (466 aa).

This sequence belongs to the class-II aminoacyl-tRNA synthetase family. As to quaternary structure, homodimer.

The protein resides in the cytoplasm. It catalyses the reaction tRNA(Asn) + L-asparagine + ATP = L-asparaginyl-tRNA(Asn) + AMP + diphosphate + H(+). This is Asparagine--tRNA ligase from Yersinia enterocolitica serotype O:8 / biotype 1B (strain NCTC 13174 / 8081).